A 772-amino-acid chain; its full sequence is Phosphatidylinositol 4-phosphate 5-kinase 5 (772 aa).

Residues Ala22–Arg56 form a disordered region. Over residues Thr43 to Thr52 the composition is skewed to acidic residues. MORN repeat units follow at residues Tyr75–Met97, Tyr98–Thr120, Tyr121–Ala143, Tyr144–Ala166, Tyr167–Tyr189, Tyr190–Arg212, Tyr213–Phe235, and Tyr236–Glu257. The region spanning Ser377–Phe768 is the PIPK domain. Residues Ser646 to Arg665 form a disordered region. An activation loop region spans residues Tyr728–Ser749.

It carries out the reaction a 1,2-diacyl-sn-glycero-3-phospho-(1D-myo-inositol 4-phosphate) + ATP = a 1,2-diacyl-sn-glycero-3-phospho-(1D-myo-inositol-4,5-bisphosphate) + ADP + H(+). The chain is Phosphatidylinositol 4-phosphate 5-kinase 5 (PIP5K5) from Arabidopsis thaliana (Mouse-ear cress).